A 254-amino-acid polypeptide reads, in one-letter code: Protein GVQW3 (254 aa).

The polypeptide is Protein GVQW3 (Homo sapiens (Human)).